A 730-amino-acid chain; its full sequence is Polyribonucleotide nucleotidyltransferase (730 aa).

Residues Asp489 and Asp495 each coordinate Mg(2+). The KH domain maps to 556–615 (PRIEVMKIAVDKIREVIGSGGKVIREIVEKTGAKINIEDDGTIKIASASGDAIKAAINWI). Residues 625-693 (GQIYEGTVVK…ERGKTRLSMK (69 aa)) form the S1 motif domain. The disordered stretch occupies residues 700–730 (GEDLEAKAKAERDAARAAAPAATGDEAGAAE). The span at 703 to 714 (LEAKAKAERDAA) shows a compositional bias: basic and acidic residues. The segment covering 715–730 (RAAAPAATGDEAGAAE) has biased composition (low complexity).

This sequence belongs to the polyribonucleotide nucleotidyltransferase family. Requires Mg(2+) as cofactor.

It localises to the cytoplasm. The enzyme catalyses RNA(n+1) + phosphate = RNA(n) + a ribonucleoside 5'-diphosphate. Its function is as follows. Involved in mRNA degradation. Catalyzes the phosphorolysis of single-stranded polyribonucleotides processively in the 3'- to 5'-direction. This chain is Polyribonucleotide nucleotidyltransferase, found in Xanthobacter autotrophicus (strain ATCC BAA-1158 / Py2).